Here is a 150-residue protein sequence, read N- to C-terminus: Urease accessory protein UreE (150 aa).

This sequence belongs to the UreE family.

It localises to the cytoplasm. Functionally, involved in urease metallocenter assembly. Binds nickel. Probably functions as a nickel donor during metallocenter assembly. The polypeptide is Urease accessory protein UreE (Staphylococcus saprophyticus subsp. saprophyticus (strain ATCC 15305 / DSM 20229 / NCIMB 8711 / NCTC 7292 / S-41)).